The following is a 271-amino-acid chain: Glutamate racemase (271 aa).

Residues 12–13 (DS) and 44–45 (YG) each bind substrate. C75 acts as the Proton donor/acceptor in catalysis. Position 76–77 (76–77 (NT)) interacts with substrate. C185 (proton donor/acceptor) is an active-site residue. Residue 186-187 (TH) coordinates substrate.

It belongs to the aspartate/glutamate racemases family.

It catalyses the reaction L-glutamate = D-glutamate. Its pathway is cell wall biogenesis; peptidoglycan biosynthesis. Functionally, provides the (R)-glutamate required for cell wall biosynthesis. The sequence is that of Glutamate racemase from Mycobacterium marinum (strain ATCC BAA-535 / M).